Consider the following 865-residue polypeptide: Protein translocase subunit SecA (865 aa).

Residues Gln-93, 111–115 (GEGKT), and Asp-501 each bind ATP. Zn(2+) contacts are provided by Cys-841, Cys-843, Cys-852, and Cys-853.

Belongs to the SecA family. In terms of assembly, monomer and homodimer. Part of the essential Sec protein translocation apparatus which comprises SecA, SecYEG and auxiliary proteins SecDF-YajC and YidC. The cofactor is Zn(2+).

It localises to the cell inner membrane. Its subcellular location is the cytoplasm. It carries out the reaction ATP + H2O + cellular proteinSide 1 = ADP + phosphate + cellular proteinSide 2.. In terms of biological role, part of the Sec protein translocase complex. Interacts with the SecYEG preprotein conducting channel. Has a central role in coupling the hydrolysis of ATP to the transfer of proteins into and across the cell membrane, serving as an ATP-driven molecular motor driving the stepwise translocation of polypeptide chains across the membrane. This is Protein translocase subunit SecA from Helicobacter pylori (strain Shi470).